A 186-amino-acid polypeptide reads, in one-letter code: Putative 5'(3')-deoxyribonucleotidase (186 aa).

The protein belongs to the 5'(3')-deoxyribonucleotidase family. Mg(2+) serves as cofactor.

In terms of biological role, dephosphorylates the 5' and 2'(3')-phosphates of deoxyribonucleotides. The sequence is that of Putative 5'(3')-deoxyribonucleotidase from Bordetella parapertussis (strain 12822 / ATCC BAA-587 / NCTC 13253).